The sequence spans 1462 residues: Trifunctional nucleotide phosphoesterase protein YfkN (1462 aa).

Residues 1–35 form the signal peptide; the sequence is MRIQKRRTHVENILRILLPPIMILSLILPTPPIHA. Positions 36–623 are 2',3'-cyclic nucleotide 2'-phosphodiesterase/3'-nucleotidase; the sequence is EESAAPQVHL…GTNLTFESSL (588 aa). The a divalent metal cation site is built by Asp-52, His-54, Asp-97, Asn-141, His-249, His-282, and His-284. A ribonucleoside 3'-phosphate-binding positions include Tyr-458 and 561–567; that span reads YRASGGG. A 5'-nucleotidase region spans residues 624–1427; the sequence is LAKPFADKAD…GPAGGLLPDT (804 aa). Asp-676, His-678, Asp-708, Asn-740, His-872, His-895, and His-897 together coordinate a divalent metal cation. A ribonucleoside 5'-phosphate contacts are provided by residues Phe-1047 and 1127–1133; that span reads FVGAGGD. The interval 1350 to 1422 is disordered; the sequence is ILNSGSNNKP…GSGTDGPAGG (73 aa). Residues 1405–1421 show a composition bias toward gly residues; sequence GSGGNGSGGSGTDGPAG. Positions 1424 to 1428 match the LPXTG sorting signal motif; the sequence is LPDTA. Thr-1427 carries the pentaglycyl murein peptidoglycan amidated threonine modification. A propeptide spans 1428–1462 (removed by sortase); it reads ATSMYSILLAGFLISALGTAMYLHQRRKQNRANQA.

Belongs to the 5'-nucleotidase family. Requires a divalent metal cation as cofactor.

The protein localises to the secreted. It is found in the cell wall. The catalysed reaction is a nucleoside 2',3'-cyclic phosphate + H2O = a nucleoside 3'-phosphate + H(+). It carries out the reaction a ribonucleoside 3'-phosphate + H2O = a ribonucleoside + phosphate. It catalyses the reaction a ribonucleoside 5'-phosphate + H2O = a ribonucleoside + phosphate. Functionally, catalyzes the release of inorganic phosphate from 2',3'-cyclic nucleotides through consecutive 2',3'-phosphodiesterase and 3'- (or 2') nucleotidase activities. Also possesses a 5'-nucleotidase activity. Does not catalyze the release of inorganic phosphate from 3',5'-cyclic nucleotides. Probably plays a role in the cellular reprocessing of nucleotides present in the medium, under conditions of phosphate shortage. The sequence is that of Trifunctional nucleotide phosphoesterase protein YfkN (yfkN) from Bacillus subtilis (strain 168).